The chain runs to 279 residues: NAD kinase (279 aa).

Asp-57 (proton acceptor) is an active-site residue. Residues Asp-57 to Gly-58, Asn-133 to Glu-134, Arg-159, Asp-161, and Thr-172 to Ser-177 contribute to the NAD(+) site.

Belongs to the NAD kinase family. It depends on a divalent metal cation as a cofactor.

The protein resides in the cytoplasm. The enzyme catalyses NAD(+) + ATP = ADP + NADP(+) + H(+). Its function is as follows. Involved in the regulation of the intracellular balance of NAD and NADP, and is a key enzyme in the biosynthesis of NADP. Catalyzes specifically the phosphorylation on 2'-hydroxyl of the adenosine moiety of NAD to yield NADP. The sequence is that of NAD kinase from Streptococcus pyogenes serotype M28 (strain MGAS6180).